Consider the following 338-residue polypeptide: Formamidase (338 aa).

A CN hydrolase domain is found at 14-260 (LLIAAIQYPV…WEIVTAELFP (247 aa)). The active-site Proton acceptor is E60. The Proton donor role is filled by K133. C166 acts as the Nucleophile in catalysis.

The protein belongs to the carbon-nitrogen hydrolase superfamily. Aliphatic amidase family.

It carries out the reaction formamide + H2O = formate + NH4(+). Its function is as follows. Is an aliphatic amidase with a restricted substrate specificity, as it only hydrolyzes formamide. This Photorhabdus laumondii subsp. laumondii (strain DSM 15139 / CIP 105565 / TT01) (Photorhabdus luminescens subsp. laumondii) protein is Formamidase.